The following is a 240-amino-acid chain: Oxygen-insensitive NADPH nitroreductase (240 aa).

Residues His-11 to Arg-15, Ser-39, Gln-67, Tyr-128 to Gly-131, and Lys-167 to Arg-169 contribute to the FMN site.

It belongs to the flavin oxidoreductase frp family. As to quaternary structure, homodimer. FMN serves as cofactor.

In terms of biological role, catalyzes the reduction of nitroaromatic compounds using NADPH. Has a broad electron acceptor specificity. Reduces nitrofurazone by a ping-pong bi-bi mechanism possibly to generate a two-electron transfer product. Major oxygen-insensitive nitroreductase in E.coli. This is Oxygen-insensitive NADPH nitroreductase (nfsA) from Escherichia coli (strain K12).